A 2697-amino-acid chain; its full sequence is Target of rapamycin homolog (2697 aa).

A disordered region spans residues methionine 1–arginine 25. HEAT repeat units lie at residues leucine 235–glutamine 272, glutamine 649–alanine 687, leucine 689–alanine 726, arginine 731–lysine 768, lysine 815–tyrosine 853, serine 863–lysine 900, and lysine 1073–cysteine 1110. Residues valine 1438–serine 2153 enclose the FAT domain. Disordered regions lie at residues threonine 1945 to alanine 1981 and serine 2017 to serine 2039. Positions serine 1969–alanine 1981 are enriched in pro residues. A compositionally biased stretch (polar residues) spans proline 2030–serine 2039. One can recognise a PI3K/PI4K catalytic domain in the interval phenylalanine 2332–lysine 2647. The interval valine 2338–arginine 2344 is G-loop. The catalytic loop stretch occupies residues glycine 2512–asparagine 2520. Residues histidine 2532–threonine 2557 are activation loop. The segment at aspartate 2615 to serine 2635 is disordered. The FATC domain maps to glutamate 2665–tryptophan 2697.

It belongs to the PI3/PI4-kinase family. As to expression, ubiquitous. Expressed in all major tissues and organs, including the intestine, gonads and hypodermal cells. Expressed in neurons.

The protein localises to the nucleus. It carries out the reaction L-seryl-[protein] + ATP = O-phospho-L-seryl-[protein] + ADP + H(+). The enzyme catalyses L-threonyl-[protein] + ATP = O-phospho-L-threonyl-[protein] + ADP + H(+). In terms of biological role, serine/threonine-protein kinase that regulates the mRNA translation machinery, probably by modulating the activity of translation factors such as eIF-4G and eIF-2. It may have some protein kinase activity instead of lipid kinase activity. May play a role in P-granule degradation by autophagy in somatic cells during embryogenesis. Required, during larval development, for the establishment of the proper number of germline progenitors, probably upstream of rsks-1 and ife-1. Required for larval development. May act as a mediator of lifespan regulation by insulin signaling and nutrient sensing. The sequence is that of Target of rapamycin homolog from Caenorhabditis elegans.